We begin with the raw amino-acid sequence, 344 residues long: Trace amine-associated receptor 8c (344 aa).

At 1–36 (MTSNFSQATLQLCYENVNASCIKTPYSPGLRVLLYM) the chain is on the extracellular side. N-linked (GlcNAc...) asparagine glycosylation is found at N4 and N18. 2 disulfide bridges follow: C21–C185 and C96–C189. A helical membrane pass occupies residues 37 to 57 (VFGFGAVLAVCGNLLVVISVL). Residues 58–67 (HFKQLHSPAN) are Cytoplasmic-facing. A helical membrane pass occupies residues 68–88 (FLIASLASADFLVGISVMPFS). At 89–102 (MVRSIESCWYFGDT) the chain is on the extracellular side. Residues 103-127 (FCSLHSCCDVAFCYSSALHLCFISV) traverse the membrane as a helical segment. Residues 128–146 (DRYIAVTDPLVYPTKFTVS) are Cytoplasmic-facing. A helical transmembrane segment spans residues 147-167 (VSGICISISWILPLVYSSAVF). Residues 168 to 196 (YTGISAMGIENLVSALNCVGGCQVVVNQD) are Extracellular-facing. A helical membrane pass occupies residues 197-217 (WVLISFLLFFIPTLVMIILYS). At 218–260 (KIFLVAKQQAVKIETSVSGSKGESSLESHKARVAKRERKAAKT) the chain is on the cytoplasmic side. The chain crosses the membrane as a helical span at residues 261–281 (LGVTVLAFIVSWLPYTIDTLI). Residues 282-295 (DAFMGFITPAYVYE) are Extracellular-facing. Residues 296–319 (FCCWSAYYNSAMNPLIYAFFYPWF) form a helical membrane-spanning segment. Residues 320-344 (RKAMKLILSGKILKGHSSTTSLFSE) are Cytoplasmic-facing.

The protein belongs to the G-protein coupled receptor 1 family.

It localises to the cell membrane. In terms of biological role, olfactory receptor activated by trace amines, such as N-methylpiperidine and N,N-dimethylcyclohexylamine. Trace amine compounds are enriched in animal body fluids and act on trace amine-associated receptors (TAARs) to elicit both intraspecific and interspecific innate behaviors. Ligand-binding causes a conformation change that triggers signaling via G(s)-class of G alpha proteins (GNAL or GNAS). This is Trace amine-associated receptor 8c from Rattus norvegicus (Rat).